We begin with the raw amino-acid sequence, 464 residues long: Kynureninase 2 (464 aa).

Residues leucine 135, threonine 136, 163–166, aspartate 248, histidine 251, and tyrosine 273 each bind pyridoxal 5'-phosphate; that span reads FPSD. N6-(pyridoxal phosphate)lysine is present on lysine 274. Residues tryptophan 313 and asparagine 341 each coordinate pyridoxal 5'-phosphate.

Belongs to the kynureninase family. As to quaternary structure, homodimer. Pyridoxal 5'-phosphate is required as a cofactor.

Its subcellular location is the cytoplasm. The enzyme catalyses L-kynurenine + H2O = anthranilate + L-alanine + H(+). It carries out the reaction 3-hydroxy-L-kynurenine + H2O = 3-hydroxyanthranilate + L-alanine + H(+). The protein operates within amino-acid degradation; L-kynurenine degradation; L-alanine and anthranilate from L-kynurenine: step 1/1. It participates in cofactor biosynthesis; NAD(+) biosynthesis; quinolinate from L-kynurenine: step 2/3. Functionally, catalyzes the cleavage of L-kynurenine (L-Kyn) and L-3-hydroxykynurenine (L-3OHKyn) into anthranilic acid (AA) and 3-hydroxyanthranilic acid (3-OHAA), respectively. This is Kynureninase 2 (bna5-2) from Aspergillus clavatus (strain ATCC 1007 / CBS 513.65 / DSM 816 / NCTC 3887 / NRRL 1 / QM 1276 / 107).